The sequence spans 214 residues: Putative archaetidylserine decarboxylase proenzyme (214 aa).

Catalysis depends on Ser180, which acts as the Schiff-base intermediate with substrate; via pyruvic acid. Ser180 carries the post-translational modification Pyruvic acid (Ser); by autocatalysis.

Belongs to the phosphatidylserine decarboxylase family. PSD-A subfamily. Heterodimer of a large membrane-associated beta subunit and a small pyruvoyl-containing alpha subunit. It depends on pyruvate as a cofactor. Is synthesized initially as an inactive proenzyme. Formation of the active enzyme involves a self-maturation process in which the active site pyruvoyl group is generated from an internal serine residue via an autocatalytic post-translational modification. Two non-identical subunits are generated from the proenzyme in this reaction, and the pyruvate is formed at the N-terminus of the alpha chain, which is derived from the carboxyl end of the proenzyme. The post-translation cleavage follows an unusual pathway, termed non-hydrolytic serinolysis, in which the side chain hydroxyl group of the serine supplies its oxygen atom to form the C-terminus of the beta chain, while the remainder of the serine residue undergoes an oxidative deamination to produce ammonia and the pyruvoyl prosthetic group on the alpha chain.

The protein resides in the cell membrane. It catalyses the reaction archaetidylserine + H(+) = archaetidylethanolamine + CO2. Catalyzes the formation of archaetidylethanolamine (PtdEtn) from archaetidylserine (PtdSer). This chain is Putative archaetidylserine decarboxylase proenzyme, found in Methanopyrus kandleri (strain AV19 / DSM 6324 / JCM 9639 / NBRC 100938).